The following is a 125-amino-acid chain: PEP-dependent dihydroxyacetone kinase 2, phosphoryl donor subunit DhaM (125 aa).

Residues methionine 1–histidine 125 form the PTS EIIA type-4 domain. The Tele-phosphohistidine intermediate role is filled by histidine 9.

This sequence belongs to the PEP-utilizing enzyme family. As to quaternary structure, homodimer. The dihydroxyacetone kinase complex is composed of a homodimer of DhaM, a homodimer of DhaK and the subunit DhaL.

It localises to the cytoplasm. It carries out the reaction dihydroxyacetone + phosphoenolpyruvate = dihydroxyacetone phosphate + pyruvate. Functionally, component of the dihydroxyacetone kinase complex, which is responsible for the phosphoenolpyruvate (PEP)-dependent phosphorylation of dihydroxyacetone. DhaM serves as the phosphoryl donor. Is phosphorylated by phosphoenolpyruvate in an EI- and HPr-dependent reaction, and a phosphorelay system on histidine residues finally leads to phosphoryl transfer to DhaL and dihydroxyacetone. In Listeria innocua serovar 6a (strain ATCC BAA-680 / CLIP 11262), this protein is PEP-dependent dihydroxyacetone kinase 2, phosphoryl donor subunit DhaM.